Reading from the N-terminus, the 916-residue chain is Translation initiation factor IF-2 (916 aa).

Positions 151 to 191 (NLDEQQRLAESDRARDEAIQRKRDEEQAAKDRVEAERKAAE) are enriched in basic and acidic residues. Disordered stretches follow at residues 151–262 (NLDE…SHVM) and 280–328 (HLSA…ERPT). 2 stretches are compositionally biased toward low complexity: residues 192-243 (EAAA…ATPA) and 293-305 (RGKP…SSSS). The region spanning 415-584 (SRPPVVTIMG…SLQAEVLELK (170 aa)) is the tr-type G domain. The tract at residues 424–431 (GHVDHGKT) is G1. 424 to 431 (GHVDHGKT) is a GTP binding site. The segment at 449–453 (GITQH) is G2. The tract at residues 470–473 (DTPG) is G3. GTP contacts are provided by residues 470–474 (DTPGH) and 524–527 (NKID). The tract at residues 524–527 (NKID) is G4. The segment at 560 to 562 (SAK) is G5.

Belongs to the TRAFAC class translation factor GTPase superfamily. Classic translation factor GTPase family. IF-2 subfamily.

It is found in the cytoplasm. Its function is as follows. One of the essential components for the initiation of protein synthesis. Protects formylmethionyl-tRNA from spontaneous hydrolysis and promotes its binding to the 30S ribosomal subunits. Also involved in the hydrolysis of GTP during the formation of the 70S ribosomal complex. The polypeptide is Translation initiation factor IF-2 (Xanthomonas campestris pv. campestris (strain ATCC 33913 / DSM 3586 / NCPPB 528 / LMG 568 / P 25)).